We begin with the raw amino-acid sequence, 1273 residues long: Receptor-type tyrosine-protein phosphatase C (1273 aa).

The N-terminal stretch at 1–23 (MYLWLKLLAFSLALLGPEVFVTG) is a signal peptide. At 24 to 546 (QGTTDDGLDT…KPQSTSYNSK (523 aa)) the chain is on the extracellular side. Residues 45–192 (LPARTTEFTP…TEIATPQTKP (148 aa)) are disordered. 3 stretches are compositionally biased toward polar residues: residues 50–77 (TEFT…SSTL), 84–111 (QPDS…TLTA), and 141–192 (RNST…QTKP). N62 carries N-linked (GlcNAc...) asparagine glycosylation. Residues N142, N153, N164, N178, N200, N245, N250, N271, N282, N327, N333, N371, N374, N471, and N502 are each glycosylated (N-linked (GlcNAc...) asparagine). 2 Fibronectin type-III domains span residues 361-452 (PEML…TKAA) and 453-545 (RPGK…SYNS). The chain crosses the membrane as a helical span at residues 547 to 567 (ALIIFLVFLIIVTSIALLVVL). Over 568–1273 (YKIYDLRKKR…PMSPALTPSS (706 aa)) the chain is Cytoplasmic. 2 Tyrosine-protein phosphatase domains span residues 622–881 (FLAE…LVEY) and 913–1196 (LEAE…MASI). Y652 bears the Phosphotyrosine mark. Substrate is bound by residues D790, 822 to 828 (CSAGVGR), and Q866. C822 serves as the catalytic Phosphocysteine intermediate. Residues S944, S963, S966, S970, S973, S974, and S978 each carry the phosphoserine modification. The disordered stretch occupies residues 960-984 (LEMSKESEAESDESSDEDSDSEETS). The span at 968–981 (AESDESSDEDSDSE) shows a compositional bias: acidic residues. Catalysis depends on C1137, which acts as the Phosphocysteine intermediate. Residues S1209 and S1266 each carry the phosphoserine modification. The interval 1219–1273 (VDGAKQDANCVQPADPLNKAQEDSKEVGASEPASGSEEPEHSANGPMSPALTPSS) is disordered.

This sequence belongs to the protein-tyrosine phosphatase family. Receptor class 1/6 subfamily. In terms of assembly, interacts with SKAP1. Interacts with DPP4; the interaction is enhanced in an interleukin-12-dependent manner in activated lymphocytes. Binds GANAB and PRKCSH. Interacts with CD53; this interaction stabilizes PTPRC on the membrane and is required for optimal phosphatase activity. Interacts with CLEC10A. In terms of processing, heavily N- and O-glycosylated. The cytoplasmic domain contains potential phosphorylation sites. As to expression, isoform 1 and isoform 2 are found in thymocyte and lymph node. Isoform 4 and isoform 3 are found in the lymph nod.

Its subcellular location is the cell membrane. It localises to the membrane raft. It is found in the synapse. It carries out the reaction O-phospho-L-tyrosyl-[protein] + H2O = L-tyrosyl-[protein] + phosphate. In terms of biological role, protein tyrosine-protein phosphatase required for T-cell activation through the antigen receptor. Acts as a positive regulator of T-cell coactivation upon binding to DPP4. The first PTPase domain has enzymatic activity, while the second one seems to affect the substrate specificity of the first one. Upon T-cell activation, recruits and dephosphorylates SKAP1 and FYN. Dephosphorylates LYN, and thereby modulates LYN activity. Interacts with CLEC10A at antigen presenting cell-T cell contact; CLEC10A on immature dendritic cells recognizes Tn antigen-carrying PTPRC/CD45 receptor on effector T cells and modulates T cell activation threshold to limit autoreactivity. This Rattus norvegicus (Rat) protein is Receptor-type tyrosine-protein phosphatase C (Ptprc).